The primary structure comprises 350 residues: Protein O-mannose kinase (350 aa).

Residue methionine 1 is modified to N-acetylmethionine. Residues 1–20 (MEKQPQNSRRGLAPREVPPA) are Cytoplasmic-facing. A helical; Signal-anchor for type II membrane protein transmembrane segment spans residues 21-43 (VGLLLIMALMNTLLYLCLDHFFI). At 44–350 (APRQSTVDPT…AMMSQAREML (307 aa)) the chain is on the lumenal side. Positions 81–350 (VRQLKRVGEG…AMMSQAREML (270 aa)) constitute a Protein kinase domain. N-linked (GlcNAc...) asparagine glycosylation is found at asparagine 165, asparagine 220, and asparagine 235.

It belongs to the protein kinase superfamily. Ser/Thr protein kinase family. STKL subfamily. In terms of tissue distribution, highest expression is observed in brain, skeletal muscle, kidney and heart in fetal and adult tissues.

It localises to the endoplasmic reticulum membrane. It catalyses the reaction 3-O-[beta-D-GalNAc-(1-&gt;3)-beta-D-GlcNAc-(1-&gt;4)-alpha-D-Man]-L-Thr-[protein] + ATP = 3-O-[beta-D-GalNAc-(1-&gt;3)-beta-D-GlcNAc-(1-&gt;4)-(O-6-P-alpha-D-Man)]-Thr-[protein] + ADP + H(+). In terms of biological role, protein O-mannose kinase that specifically mediates phosphorylation at the 6-position of an O-mannose of the trisaccharide (N-acetylgalactosamine (GalNAc)-beta-1,3-N-acetylglucosamine (GlcNAc)-beta-1,4-mannose) to generate phosphorylated O-mannosyl trisaccharide (N-acetylgalactosamine-beta-1,3-N-acetylglucosamine-beta-1,4-(phosphate-6-)mannose). Phosphorylated O-mannosyl trisaccharide is a carbohydrate structure present in alpha-dystroglycan (DAG1), which is required for binding laminin G-like domain-containing extracellular proteins with high affinity. Only shows kinase activity when the GalNAc-beta-3-GlcNAc-beta-terminus is linked to the 4-position of O-mannose, suggesting that this disaccharide serves as the substrate recognition motif. This Homo sapiens (Human) protein is Protein O-mannose kinase (POMK).